Consider the following 338-residue polypeptide: Glycerol-1-phosphate dehydrogenase [NAD(P)+] (338 aa).

NAD(+)-binding positions include G81 to D85 and T103 to S106. A substrate-binding site is contributed by D108. Residue S112 coordinates NAD(+). D157 serves as a coordination point for substrate. D157 and H238 together coordinate Zn(2+). H242 contributes to the substrate binding site. Residue H256 coordinates Zn(2+).

The protein belongs to the glycerol-1-phosphate dehydrogenase family. As to quaternary structure, homodimer. Zn(2+) is required as a cofactor.

Its subcellular location is the cytoplasm. The catalysed reaction is sn-glycerol 1-phosphate + NAD(+) = dihydroxyacetone phosphate + NADH + H(+). It catalyses the reaction sn-glycerol 1-phosphate + NADP(+) = dihydroxyacetone phosphate + NADPH + H(+). It participates in membrane lipid metabolism; glycerophospholipid metabolism. Its function is as follows. Catalyzes the NAD(P)H-dependent reduction of dihydroxyacetonephosphate (DHAP or glycerone phosphate) to glycerol 1-phosphate (G1P). The G1P thus generated is used as the glycerophosphate backbone of phospholipids in the cellular membranes of Archaea. This Pyrobaculum calidifontis (strain DSM 21063 / JCM 11548 / VA1) protein is Glycerol-1-phosphate dehydrogenase [NAD(P)+].